Consider the following 379-residue polypeptide: Alcohol dehydrogenase 2 (379 aa).

Position 48 (Cys48) interacts with Zn(2+). 49–53 (HTDML) serves as a coordination point for NAD(+). The Zn(2+) site is built by His69, Cys100, Cys103, Cys106, Cys114, and Cys178. NAD(+)-binding positions include 203 to 208 (GLGAVG), Asp227, Lys232, 275 to 277 (TGI), 298 to 300 (IGA), and 321 to 323 (TTF).

This sequence belongs to the zinc-containing alcohol dehydrogenase family. Class-IV subfamily. In terms of assembly, homodimer. Zn(2+) serves as cofactor. In terms of tissue distribution, expressed in flowers and disk florets.

It catalyses the reaction (R,R)-chrysanthemol + NAD(+) = (1R,3R)-chrysanthemal + NADH + H(+). The enzyme catalyses nerol + NAD(+) = neral + NADH + H(+). It carries out the reaction (S)-(-)-citronellol + NAD(+) = (S)-(-)-citronellal + NADH + H(+). The catalysed reaction is perillyl alcohol + NAD(+) = perillyl aldehyde + NADH + H(+). It catalyses the reaction (6E)-8-hydroxygeraniol + NAD(+) = (6E)-8-hydroxygeranial + NADH + H(+). The enzyme catalyses (2E)-geraniol + NAD(+) = (2E)-geranial + NADH + H(+). It functions in the pathway isoprenoid biosynthesis. Its function is as follows. Component of the monoterpenoid pyrethrins biosynthesis; pyrethrins are widely used plant-derived pesticide. Mediates the conversion of trans-chrysanthemol into trans-chrysanthemal. This is Alcohol dehydrogenase 2 from Tanacetum cinerariifolium (Dalmatian daisy).